The sequence spans 562 residues: O-fucosyltransferase 4 (562 aa).

The interval 10 to 46 (SIQNRLPGSDHTTPSPPTSPHLCRSRSKSSSVSGQQQ) is disordered. Positions 37–46 (KSSSVSGQQQ) are enriched in low complexity. Residues 67–87 (GILLFAPIIYISCMLFHLHAA) form a helical; Signal-anchor for type II membrane protein membrane-spanning segment. Residues asparagine 122, asparagine 146, asparagine 185, and asparagine 239 are each glycosylated (N-linked (GlcNAc...) asparagine). A substrate-binding site is contributed by 332–334 (HLR). 4 N-linked (GlcNAc...) asparagine glycosylation sites follow: asparagine 404, asparagine 420, asparagine 450, and asparagine 555.

It belongs to the glycosyltransferase GT106 family.

Its subcellular location is the membrane. Its pathway is glycan metabolism. In Arabidopsis thaliana (Mouse-ear cress), this protein is O-fucosyltransferase 4.